Here is a 502-residue protein sequence, read N- to C-terminus: mRNA cap guanine-N(7) methyltransferase (502 aa).

Residues 1–118 (MADENPQAQG…SQQEEAMRFS (118 aa)) form a disordered region. A compositionally biased stretch (basic and acidic residues) spans 93–115 (LVDRETLRRRQEERERSQQEEAM). The region spanning 146 to 502 (SKIKGLRSFN…FYHAFCFYKV (357 aa)) is the mRNA cap 0 methyltransferase domain. 155-156 (NN) is a binding site for mRNA. S-adenosyl-L-methionine is bound by residues K159, G202, D226, D264, 307–309 (MFT), and Y312. The span at 360-369 (ERETAAKKEE) shows a compositional bias: basic and acidic residues. Positions 360–381 (ERETAAKKEEAEPEDGEVEEDD) are disordered. Positions 370–381 (AEPEDGEVEEDD) are enriched in acidic residues.

The protein belongs to the class I-like SAM-binding methyltransferase superfamily. mRNA cap 0 methyltransferase family.

The protein resides in the nucleus. The enzyme catalyses a 5'-end (5'-triphosphoguanosine)-ribonucleoside in mRNA + S-adenosyl-L-methionine = a 5'-end (N(7)-methyl 5'-triphosphoguanosine)-ribonucleoside in mRNA + S-adenosyl-L-homocysteine. Its function is as follows. Responsible for methylating the 5'-cap structure of mRNAs. In Aspergillus oryzae (strain ATCC 42149 / RIB 40) (Yellow koji mold), this protein is mRNA cap guanine-N(7) methyltransferase (abd1).